Consider the following 355-residue polypeptide: uncharacterized protein (355 aa).

The protein resides in the cytoplasm. This is an uncharacterized protein from Saccharomyces cerevisiae (strain ATCC 204508 / S288c) (Baker's yeast).